Here is a 343-residue protein sequence, read N- to C-terminus: MLTNRQLLILQVIINDFIQSAQPVGSRTLSKKDEITFSSATIRNEMADLEELGFIEKTHSSSGRIPSEKGYRYYVDHLLSPVKLTKTDLDLIHSIFKEKIFELEKTVQKSAQILSDLTNYTSIVLGPTLSENYLKQIQIVPIQPDKAVAILVTNTGHVENRTINFPAKVDLADIEKLVNILNDRLAGVPMDELNERIFKEVVTYLRQHIANYDSILESLRSTFHPAAHVEKLFFGGKINMLNQPEFHDIERVRSLLSLIEKEQDVLKLFQSSKAGISIKIGKENDYEEMENCSLITATYTVDTKQIGSIAIIGPTRMNYSRVVSLLQHVTSDLSKAFTSLYDE.

This sequence belongs to the HrcA family.

In terms of biological role, negative regulator of class I heat shock genes (grpE-dnaK-dnaJ and groELS operons). Prevents heat-shock induction of these operons. In Bacillus velezensis (strain DSM 23117 / BGSC 10A6 / LMG 26770 / FZB42) (Bacillus amyloliquefaciens subsp. plantarum), this protein is Heat-inducible transcription repressor HrcA.